A 242-amino-acid polypeptide reads, in one-letter code: Small ribosomal subunit protein uS2 (242 aa).

This sequence belongs to the universal ribosomal protein uS2 family.

In Shouchella clausii (strain KSM-K16) (Alkalihalobacillus clausii), this protein is Small ribosomal subunit protein uS2.